The primary structure comprises 260 residues: Caveolae-associated protein 3 (260 aa).

The segment at 1–84 (MGESALESGP…SNTLAQLLAK (84 aa)) is interaction with CAVIN1. Positions 20-78 (VHAVTVVTLLEKLATMLETLRERQGGLAQRQGGLAGSVRRIQSNLGALSRSHDTTSNTL) are leucine-zipper. 2 positions are modified to phosphoserine: S62 and S70. Residue K128 forms a Glycyl lysine isopeptide (Lys-Gly) (interchain with G-Cter in SUMO2) linkage. The interaction with CAV1 stretch occupies residues 135-201 (AKAFQKAPEP…SGRKGHAAPT (67 aa)). The tract at residues 140 to 260 (KAPEPLGPVE…AAVLQVESAA (121 aa)) is disordered. Over residues 157–168 (AEAEESSDEEEP) the composition is skewed to acidic residues. Residues S162, S163, and S171 each carry the phosphoserine modification. Over residues 201 to 210 (TPTPVKPPRL) the composition is skewed to pro residues.

It belongs to the CAVIN family. In terms of assembly, component of the CAVIN complex composed of CAVIN1, CAVIN2, CAVIN3 and CAVIN4. Interacts with PRKCD and with phosphatidylserine. Phosphatidylserine may form a bridge between PKC and PKC-binding partners and stabilize the binding. Interacts with PER2. Interacts with CAVIN1 and EPS15L1. Interacts (via leucine-zipper domain) with CAV1 in a cholesterol-sensitive manner. In terms of processing, in vitro, phosphorylated by PRKCD.

It localises to the cytoplasm. Its subcellular location is the membrane. The protein localises to the caveola. The protein resides in the cytosol. Its function is as follows. Regulates the traffic and/or budding of caveolae. Plays a role in caveola formation in a tissue-specific manner. Required for the formation of caveolae in smooth muscle but not in the lung and heart endothelial cells. Regulates the equilibrium between cell surface-associated and cell surface-dissociated caveolae by promoting the rapid release of caveolae from the cell surface. Plays a role in the regulation of the circadian clock. Modulates the period length and phase of circadian gene expression and also regulates expression and interaction of the core clock components PER1/2 and CRY1/2. This chain is Caveolae-associated protein 3 (CAVIN3), found in Bos taurus (Bovine).